A 101-amino-acid chain; its full sequence is Large ribosomal subunit protein eL43 (101 aa).

A C4-type zinc finger spans residues 40-62; that stretch reads CPSCRSLVRLQRIAFGIWKCPKC.

It belongs to the eukaryotic ribosomal protein eL43 family. Requires Zn(2+) as cofactor.

This chain is Large ribosomal subunit protein eL43, found in Pyrobaculum neutrophilum (strain DSM 2338 / JCM 9278 / NBRC 100436 / V24Sta) (Thermoproteus neutrophilus).